The sequence spans 282 residues: Bifunctional protein FolD (282 aa).

Residues 164–166 and Ser-189 each bind NADP(+); that span reads GRS.

This sequence belongs to the tetrahydrofolate dehydrogenase/cyclohydrolase family. Homodimer.

The catalysed reaction is (6R)-5,10-methylene-5,6,7,8-tetrahydrofolate + NADP(+) = (6R)-5,10-methenyltetrahydrofolate + NADPH. It carries out the reaction (6R)-5,10-methenyltetrahydrofolate + H2O = (6R)-10-formyltetrahydrofolate + H(+). Its pathway is one-carbon metabolism; tetrahydrofolate interconversion. Catalyzes the oxidation of 5,10-methylenetetrahydrofolate to 5,10-methenyltetrahydrofolate and then the hydrolysis of 5,10-methenyltetrahydrofolate to 10-formyltetrahydrofolate. The protein is Bifunctional protein FolD of Lactobacillus helveticus (strain DPC 4571).